Reading from the N-terminus, the 184-residue chain is Cell number regulator 5 (184 aa).

Residues 91–111 form a helical membrane-spanning segment; that stretch reads MLWGLLTSLCCVFTGGLVLAV. The disordered stretch occupies residues 162-184; it reads RTGSGSSPAPNVTPPPVQTMDEL.

Belongs to the cornifelin family. Expressed in roots, leaves, stalks, immature ears, endosperm and pollen.

The protein localises to the membrane. The chain is Cell number regulator 5 (CNR5) from Zea mays (Maize).